The sequence spans 362 residues: Cytochrome c oxidase subunit 2 (362 aa).

The N-terminal stretch at 1–28 (MEQQEKRGTVRKALLGSVIGFGGLALAG) is a signal peptide. A lipid anchor (N-palmitoyl cysteine) is attached at Cys29. Cys29 carries the S-diacylglycerol cysteine lipid modification. 2 helical membrane passes run 60-80 (FWVWVWVTAWIIGFIMWGLFI) and 107-127 (IPLELVLTIVPIIIVMALFFF). The segment at 171 to 206 (SDYVGTDEKRQEAAEKTKFDQGGDNPNPINGRSKTD) is disordered. Residues 176-191 (TDEKRQEAAEKTKFDQ) show a composition bias toward basic and acidic residues. The segment covering 197–206 (NPINGRSKTD) has biased composition (polar residues). Cu cation contacts are provided by His246, Cys287, Glu289, Cys291, His295, and Met298. Positions 325–362 (NSDALKSIGEAPYATSTHPFNSERATRDGANFDDTAAA) are disordered.

The protein belongs to the cytochrome c oxidase subunit 2 family. As to quaternary structure, associates with subunits I, III and IV to form cytochrome c oxidase. Binuclear copper center (CuA) serves as cofactor.

It localises to the cell membrane. The catalysed reaction is 4 Fe(II)-[cytochrome c] + O2 + 8 H(+)(in) = 4 Fe(III)-[cytochrome c] + 2 H2O + 4 H(+)(out). Its function is as follows. Subunits I and II form the functional core of the enzyme complex. Electrons originating in cytochrome c are transferred via heme a and Cu(A) to the binuclear center formed by heme a3 and Cu(B). The sequence is that of Cytochrome c oxidase subunit 2 (ctaC) from Corynebacterium diphtheriae (strain ATCC 700971 / NCTC 13129 / Biotype gravis).